The primary structure comprises 2217 residues: MRNWVLIAALAVICLATEQELSHKDRIRAVLRSWSPASQKQFFEPVREQKYRTMEERVIFLDTHHISKRSIAEPHVLAGMATRGCNKPGYTGETCQYPLCSARNPYIPNNDGFDDIAIDAYNLANCSESYIVVVDETMRNIKIEVETASALNPTFYLQAENGDLIFPDESIQLPTMFTANYLHLPPGQYMLGPRADTSEQFCTMMMSSRSSIHVSGGFTSGDQAERSDYPNLKFTYFDTESVVAIHAQGLDFPGQIQAIGFTGAENHISRYIPMTTRFNCTYPYILERYTCRKTSNNDAGHNLIQVEGVTNSGYKFRRIVPYQCVLPPVTTTTPAVPTTPAAPITSCQNGGQLLTDSNGVAYCYCFGLYSGSTCSQMLCANGGFLPTPTSDRCQCPEGFSGFHCQNILCTDMSGFDFNAENPTLTLVIRSRSQLSAVIEQATESVQSIVDLLASEPGYLSKFIVVLFDNGKLLVNRQYDSWDAAMVDLTKAIHSAPSEGGCDDVVMSAVASALSLYPTNKSPIYVITDATPNDSAEKETVFHLESYWRAPIYFIYVQPSPADGCNSSPDNSAYRDMVDMAARSSGNTFYFSDRSTISTFFYRHMLNTLFRSQLVLSGDYSHCSSQNLYKSAAFDLSVDYVTIVATGTNLTLVVTSPTGQYPTFNTAFSDGVNYVWTYNSPVAGQWFFSIRSLEPEAACTFKVYQKKFNFGGQTQYSPDYDIFWSFASTLTSAAGVLRQPVLGFDSSPVFHVTNYPQFLSMDRVHANLQIYAIRDGVQTEVYGSSGMYRDACEFNFYFPPFTCRVPEEVLYFNFFARDNNDMALQRAGTMFCAAVHPTPPPDHQCQNGGVMNPSNTTCFCTPEFTGTYCQNIICYNGGTASGDHCVCPPGYAGESCEMARCIETGPNPEFIRYGVDMVFAVEITQNSIASLSMLNINFQEILRDVLMQNRGWIRNFVLVGFNSTWGGPIAESPADNLTAITTALRTLASSVPADTGCTVKLWDALNYAIFSRQMAPGSFVEIFQTTPEDDTDTRSLGLFYDMSRTMELVLYGFLTSNPRLQPEGFVCNATVENYYTLLGIVSGSTGTTYSLQANEISNAVRLIPLQFSNGQVTFNALDDCRHDDGLITYFPVDAYTQTIQIQTFGYGTTIQVYTGAGVMAEALELFYDDFTGQSVYEIRKACDEGWEPIGQYCIKFMATVENILPMPQAKAFCASAGGFLVDDLTDDKNGFLKSVAANTQFWTGLFKNNDGQFYWDRGTGINPDLLNQPITYWADGEPSDDPTRQCVYFNGRSGDANKVWTTDTCAEPRAFACQKHRYDADHRPNVIGDDDLPAGWWYAKVKSNPPSGYPNMCTMSVRVQSSLQIVTGFSTKIGNDFPLPDPIQDSTENRLISYVHSVDNENRVPILTDAILWDAYNGTFYNGLKYQVRFGCQFAWVTQDFPCPNGDSQANEFGVLHVGEDEFGNTFQRLTFGHCSRAQITCGNGGIRQNGQCVCTDYWTGSRCTVPICVNGGTRNPDEATCSCPDGYEGPNCQFEVCQPNVPQLFSNDRKSLLMVVETTRQNSDTVNQLIANLKNIVSAVTNNMPLWFTNFGLVTFDTTGRTFEKFDYTSIDDLITDLTTQSNAISTDGVCSMPYLGVLAHLLEHDDVIAMPNSEIFLVTPAGPSDLGNYVETMEVLFNTQAHLHYVVSKTANCATFDGVNNVRDMTWLGYGSSGNILFTDPANIVNLFNSYLPTLYGASVLQDPTGITNYTCSDGSLPWFVPVDINTTFIYVTTSAEFGSLSVKDPLGAAHSATPVYNVNDQKIYAIEVDRLGGIWTLQLVQPPGLCLAHVYSTGGAKVYTKFSMPNPIGGKPDPLGSHQDGRFVQPTAGFDNVAVFHLAGNPFHRGQLQYVEIFDIGANSITNILRSELYVRAGCSYEYYSDLFTCNGDMIAVYVHGVDEANQKFRRQEIVICNGRSPTTNQPATGTIGPITMPTQQTALTQGPVTQQTQVPGTQPTQGPVATTQNPYTSAQFDVVFMIDGSQSAQSSFDSLTKFVQTFMVSFNVGQSGARVGLIVVGGDITNPIPPAANLNSLSSQAMLNSNLAQLSGGYTDFEDAGQILNYTLQIVSSPDFMAANNGYRSGISNHVLIYLTTTTAFDTDPTPAAQTILAQKQYGIITIGYGGATDNNKLQTISGGSACSFTAPDFASLNNQIKTIQQLILNANANGGVYCINN.

The signal sequence occupies residues 1–16 (MRNWVLIAALAVICLA). EGF-like domains follow at residues 370–405 (SGSTCSQMLCANGGFLPTPTSDRCQCPEGFSGFHCQ) and 864–896 (TGTYCQNIICYNGGTASGDHCVCPPGYAGESCE). 8 disulfide bridges follow: cysteine 379-cysteine 393, cysteine 395-cysteine 404, cysteine 868-cysteine 873, cysteine 886-cysteine 895, cysteine 1212-cysteine 1312, cysteine 1285-cysteine 1304, cysteine 1508-cysteine 1521, and cysteine 1523-cysteine 1532. The region spanning 1188 to 1313 (IGQYCIKFMA…CAEPRAFACQ (126 aa)) is the C-type lectin domain. Positions 1499-1533 (TGSRCTVPICVNGGTRNPDEATCSCPDGYEGPNCQ) constitute an EGF-like 3 domain. A VWFA domain is found at 2016-2202 (DVVFMIDGSQ…NNQIKTIQQL (187 aa)).

It is found in the secreted. Its function is as follows. Plays a role in innate immunity, probably via the atf-7 pathway, to confer resistance to pathogenic bacteria. May also play a role in the regulation of longevity. In Caenorhabditis elegans, this protein is Protein irg-7.